Reading from the N-terminus, the 499-residue chain is Alpha-amylase A type-3 (499 aa).

The signal sequence occupies residues 1–21; it reads MMVAWWSLFLYGLQVAAPALA. C51 and C59 are disulfide-bonded. Substrate is bound at residue W104. A Ca(2+)-binding site is contributed by N142. H143 is a substrate binding site. A disulfide bridge connects residues C171 and C185. Ca(2+) is bound by residues E183 and D196. An N-linked (GlcNAc...) asparagine glycan is attached at N218. R225 provides a ligand contact to substrate. Positions 227, 231, and 251 each coordinate Ca(2+). Residue D227 is the Nucleophile of the active site. Position 230-231 (230-231) interacts with substrate; it reads KH. E251 serves as the catalytic Proton donor. G255 is a binding site for substrate. A disulfide bridge connects residues C261 and C304. R365 is a binding site for substrate. C461 and C496 are disulfide-bonded.

The protein belongs to the glycosyl hydrolase 13 family. Monomer. Requires Ca(2+) as cofactor.

It localises to the secreted. The catalysed reaction is Endohydrolysis of (1-&gt;4)-alpha-D-glucosidic linkages in polysaccharides containing three or more (1-&gt;4)-alpha-linked D-glucose units.. This Aspergillus oryzae (strain ATCC 42149 / RIB 40) (Yellow koji mold) protein is Alpha-amylase A type-3 (amy3).